An 811-amino-acid polypeptide reads, in one-letter code: G-type lectin S-receptor-like serine/threonine-protein kinase LECRK2 (811 aa).

The N-terminal stretch at 1 to 23 (MAPLLFLPILQLLLLYCTKSAQA) is a signal peptide. In terms of domain architecture, Bulb-type lectin spans 24 to 153 (QLNISIGSSL…DGATKWESFG (130 aa)). At 24 to 464 (QLNISIGSSL…DKKYWILGSS (441 aa)) the chain is on the extracellular side. Residues Asn26, Asn39, Asn59, Asn219, Asn226, Asn237, and Asn242 are each glycosylated (N-linked (GlcNAc...) asparagine). Positions 292–344 (PENICQTIQTKVGSGACGFNSYCTFDGTKNTTNCLCPQRYKFFDNERTYKGCR) constitute an EGF-like; atypical domain. Intrachain disulfides connect Cys296–Cys314, Cys308–Cys325, Cys327–Cys343, Cys389–Cys411, and Cys393–Cys399. An N-linked (GlcNAc...) asparagine glycan is attached at Asn321. One can recognise a PAN domain in the interval 352 to 436 (CDLDETAAMV…LQATVLLKVP (85 aa)). Residues 465 to 485 (LFFGSSVLVNFLLIFVLLFGT) traverse the membrane as a helical segment. Topologically, residues 486–811 (YCSITSRKKT…DPSSYISSLA (326 aa)) are cytoplasmic. Residues 521–795 (GGFHEVLGTG…KVMQMLDGAV (275 aa)) form the Protein kinase domain. ATP contacts are provided by residues 527–535 (LGTGASGIV) and Lys551. Asp645 (proton acceptor) is an active-site residue.

It belongs to the protein kinase superfamily. Ser/Thr protein kinase family.

The protein resides in the membrane. The enzyme catalyses L-seryl-[protein] + ATP = O-phospho-L-seryl-[protein] + ADP + H(+). It carries out the reaction L-threonyl-[protein] + ATP = O-phospho-L-threonyl-[protein] + ADP + H(+). Involved in resistance against the herbivorous insect brown planthopper (N.lugens, BPH). Member of the BPH3 (BPH resistance locus 3) cluster which contains LECRK1, LECRK2 and LECRK3. The protein is G-type lectin S-receptor-like serine/threonine-protein kinase LECRK2 of Oryza sativa subsp. japonica (Rice).